We begin with the raw amino-acid sequence, 662 residues long: Biosynthetic arginine decarboxylase (662 aa).

Lysine 126 is subject to N6-(pyridoxal phosphate)lysine. 308-318 (LNVGGGLGVDY) contacts substrate.

Belongs to the Orn/Lys/Arg decarboxylase class-II family. SpeA subfamily. Requires Mg(2+) as cofactor. It depends on pyridoxal 5'-phosphate as a cofactor.

It carries out the reaction L-arginine + H(+) = agmatine + CO2. Functionally, catalyzes the biosynthesis of agmatine from arginine. This Deinococcus radiodurans (strain ATCC 13939 / DSM 20539 / JCM 16871 / CCUG 27074 / LMG 4051 / NBRC 15346 / NCIMB 9279 / VKM B-1422 / R1) protein is Biosynthetic arginine decarboxylase.